The following is a 558-amino-acid chain: Glypican-1 (558 aa).

An N-terminal signal peptide occupies residues 1–23 (MELRARGWWLLCAAAALVACTRG). 7 disulfides stabilise this stretch: C32/C68, C62/C256, C69/C259, C191/C343, C246/C279, C268/C415, and C272/C401. 2 N-linked (GlcNAc...) asparagine glycosylation sites follow: N79 and N116. A disordered region spans residues 478–531 (FQDASDDGSGSGSGGGCPDDACGRRVSKKSSSSRTPLIHALPGLSEQEGQKTSA). O-linked (Xyl...) (heparan sulfate) serine glycans are attached at residues S486, S488, and S490. S530 is lipidated: GPI-anchor amidated serine. The propeptide at 531 to 558 (AATRPEPHYFFLLFLFTLVLAAARPRWR) is removed in mature form.

It belongs to the glypican family. In terms of processing, S-nitrosylated in a Cu(2+)-dependent manner. Nitric acid (NO) is released from the nitrosylated cysteines by ascorbate or by some other reducing agent, in a Cu(2+) or Zn(2+) dependent manner. This free nitric oxide is then capable of cleaving the heparan sulfate side chains. Post-translationally, N- and O-glycosylated. N-glycosylation is mainly of the complex type containing sialic acid. O-glycosylated with heparan sulfate. The heparan sulfate chains can be cleaved either by the action of heparanase or, degraded by a deaminative process that uses nitric oxide (NO) released from the S-nitrosylated cysteines. This process is triggered by ascorbate, or by some other reducing agent, in a Cu(2+)- or Zn(2+) dependent manner. Cu(2+) ions are provided by ceruloproteins such as APP, PRNP or CP which associate with GCP1 in intracellular compartments or lipid rafts. This cell-associated glypican is further processed to give rise to a medium-released species. Nervous system.

The protein resides in the cell membrane. The protein localises to the endosome. It localises to the secreted. It is found in the extracellular space. Cell surface proteoglycan that bears heparan sulfate. May act as a catalyst in increasing the rate of conversion of prion protein PRPN(C) to PRNP(Sc) via associating (via the heparan sulfate side chains) with both forms of PRPN, targeting them to lipid rafts and facilitating their interaction. Required for proper skeletal muscle differentiation by sequestering FGF2 in lipid rafts preventing its binding to receptors (FGFRs) and inhibiting the FGF-mediated signaling. Binds Cu(2+) or Zn(2+) ions. Binds, via the heparan sulfate side chains, alpha-4 (V) collagen and participates in Schwann cell myelination. In Rattus norvegicus (Rat), this protein is Glypican-1 (Gpc1).